The primary structure comprises 144 residues: Superoxide dismutase [Mn], mitochondrial (144 aa).

Mn(2+) is bound by residues His10, His58, and Asp143.

This sequence belongs to the iron/manganese superoxide dismutase family. Homotetramer. Mn(2+) is required as a cofactor.

It is found in the mitochondrion matrix. It catalyses the reaction 2 superoxide + 2 H(+) = H2O2 + O2. Its function is as follows. Destroys superoxide anion radicals which are normally produced within the cells and which are toxic to biological systems. The chain is Superoxide dismutase [Mn], mitochondrial from Palinurus vulgaris (European spiny lobster).